Consider the following 288-residue polypeptide: T-lymphocyte activation antigen CD80 (288 aa).

The N-terminal stretch at 1–34 (MGHTRRQGTSPSKCPYLNFFQLLVLAGLSHFCSG) is a signal peptide. The 101-residue stretch at 35–135 (VIHVTKEVKE…FKREHLAEVT (101 aa)) folds into the Ig-like V-type domain. Residues 35 to 242 (VIHVTKEVKE…TTKQEHFPDN (208 aa)) lie on the Extracellular side of the membrane. 2 cysteine pairs are disulfide-bonded: cysteine 50/cysteine 116 and cysteine 162/cysteine 216. Residues asparagine 53, asparagine 89, asparagine 98, asparagine 186, asparagine 207, asparagine 211, asparagine 226, and asparagine 232 are each glycosylated (N-linked (GlcNAc...) asparagine). Residues 145-230 (PSISDFEIPT…GHLRVNQTFN (86 aa)) form the Ig-like C2-type domain. Residues 243 to 263 (LLPSWAITLISVNGIFVICCL) traverse the membrane as a helical segment. 4 S-palmitoyl cysteine lipidation sites follow: cysteine 261, cysteine 262, cysteine 266, and cysteine 271. The Cytoplasmic portion of the chain corresponds to 264-288 (TYCFAPRCRERRRNERLRRESVRPV). Position 284 is a phosphoserine (serine 284).

As to quaternary structure, homodimer. Interacts with CTLA4; this interaction inhibits T-cell activation. Interacts with PDL1/CD274; this interaction blocks PDL1/PDCD1 binding and thus PDL1/CD274 inhibitory function. Interacts with CD28. In terms of assembly, (Microbial infection) Interacts with adenovirus subgroup B fiber proteins. (Microbial infection) Interacts with Orthopoxvirus OPG038/M2 protein, inhibiting the interaction with CTLA4/CD152. In terms of processing, palmitoylated by ZDHHC20; palmitoylation protects CD80 from ubiquitin-mediated degradation, regulating the protein stability, and ensures its accurate plasma membrane localization. In terms of tissue distribution, expressed on activated B-cells, macrophages and dendritic cells.

It is found in the cell membrane. Functionally, costimulatory molecule that belongs to the immunoglobulin superfamily that plays an important role in T-lymphocyte activation. Acts as the primary auxiliary signal augmenting the MHC/TCR signal in naive T-cells together with the CD28 receptor which is constitutively expressed on the cell surface of T-cells. In turn, activates different signaling pathways such as NF-kappa-B or MAPK leading to the production of different cytokines. In addition, CD28/CD80 costimulatory signal stimulates glucose metabolism and ATP synthesis of T-cells by activating the PI3K/Akt signaling pathway. Also acts as a regulator of PDL1/PDCD1 interactions to limit excess engagement of PDL1 and its inhibitory role in immune responses. Expressed on B-cells, plays a critical role in regulating interactions between B-cells and T-cells in both early and late germinal center responses, which are crucial for the generation of effective humoral immune responses. In terms of biological role, (Microbial infection) Acts as a receptor for adenovirus subgroup B. The protein is T-lymphocyte activation antigen CD80 (CD80) of Homo sapiens (Human).